The sequence spans 119 residues: Ribonuclease P protein component (119 aa).

It belongs to the RnpA family. Consists of a catalytic RNA component (M1 or rnpB) and a protein subunit.

It catalyses the reaction Endonucleolytic cleavage of RNA, removing 5'-extranucleotides from tRNA precursor.. RNaseP catalyzes the removal of the 5'-leader sequence from pre-tRNA to produce the mature 5'-terminus. It can also cleave other RNA substrates such as 4.5S RNA. The protein component plays an auxiliary but essential role in vivo by binding to the 5'-leader sequence and broadening the substrate specificity of the ribozyme. This Salmonella schwarzengrund (strain CVM19633) protein is Ribonuclease P protein component.